The following is a 480-amino-acid chain: Ribosomal protein uS12 methylthiotransferase RimO (480 aa).

Residues 37–147 (NRIGFVSLGC…VLKHVHKYVP (111 aa)) enclose the MTTase N-terminal domain. [4Fe-4S] cluster-binding residues include cysteine 46, cysteine 82, cysteine 111, cysteine 179, cysteine 183, and cysteine 186. The Radical SAM core domain maps to 165-402 (LTPKHYAYLK…MEVQAEISAE (238 aa)). The TRAM domain maps to 405–471 (ARFVGRTMDI…EHDLWAELVD (67 aa)).

Belongs to the methylthiotransferase family. RimO subfamily. It depends on [4Fe-4S] cluster as a cofactor.

It localises to the cytoplasm. It catalyses the reaction L-aspartate(89)-[ribosomal protein uS12]-hydrogen + (sulfur carrier)-SH + AH2 + 2 S-adenosyl-L-methionine = 3-methylsulfanyl-L-aspartate(89)-[ribosomal protein uS12]-hydrogen + (sulfur carrier)-H + 5'-deoxyadenosine + L-methionine + A + S-adenosyl-L-homocysteine + 2 H(+). Its function is as follows. Catalyzes the methylthiolation of an aspartic acid residue of ribosomal protein uS12. The chain is Ribosomal protein uS12 methylthiotransferase RimO from Shewanella sp. (strain ANA-3).